A 1345-amino-acid chain; its full sequence is Rho guanine nucleotide exchange factor 10 (1345 aa).

2 disordered regions span residues 1–84 (MEQG…PAKL) and 99–120 (TPLQEDQPSSPDANTEEEGVGL). Residues 22–39 (NNEEEGELFDFDSGDEVP) are compositionally biased toward acidic residues. The span at 40-54 (EADRQVPSADDRTRG) shows a compositional bias: basic and acidic residues. The span at 102-111 (QEDQPSSPDA) shows a compositional bias: polar residues. The residue at position 157 (S157) is a Phosphoserine. 2 disordered regions span residues 158-195 (VEEEEAAETVGDGQCNSLSSEDLPHSSEQGSQEGSALA) and 207-273 (MENP…IPRS). Over residues 171 to 191 (QCNSLSSEDLPHSSEQGSQEG) the composition is skewed to polar residues. Acidic residues predominate over residues 224 to 239 (DSEPDEMIYDDVENGE). A compositionally biased stretch (low complexity) spans 242–255 (GNSSPEYGWSSSEF). The stretch at 307–335 (GAMEIQQAKQRQERKMQKLMKAAKEGTKD) forms a coiled coil. S355 carries the phosphoserine modification. One can recognise a DH domain in the interval 397 to 584 (VRRYILGSIV…ETLAEKLNER (188 aa)). 2 disordered regions span residues 1202 to 1237 (DRARDSPRSGSELQDEDPKDLLCSEEGPSCPGQPDT) and 1253 to 1306 (KNDL…RASS). Over residues 1256-1271 (LSSSSGSLNLSHGSSS) the composition is skewed to low complexity. S1262 carries the post-translational modification Phosphoserine. The residue at position 1314 (Q1314) is an N5-methylglutamine.

In terms of processing, methylated at Gln-1314 by N6AMT1. In terms of tissue distribution, ubiquitously expressed.

In terms of biological role, may play a role in developmental myelination of peripheral nerves. This is Rho guanine nucleotide exchange factor 10 (Arhgef10) from Mus musculus (Mouse).